The following is a 952-amino-acid chain: Lysosomal alpha-glucosidase (952 aa).

Residues 1–27 form the signal peptide; it reads MRVRHPPCSRRLLAICALVSLATAALL. Positions 28–69 are excised as a propeptide; sequence GHILLHDFLLVPRELSGSSPVLEETHPAHQQGASRPGPRDAQ. Residues 47 to 80 are disordered; it reads PVLEETHPAHQQGASRPGPRDAQAHLGRPRAVPT. A P-type domain is found at 80-131; sequence TQCDVPPNSRFDCAPDKAITREQCDARGCCYIPAKQGLRGAQMGQPWCFFPP. Cystine bridges form between cysteine 82-cysteine 109, cysteine 92-cysteine 108, and cysteine 103-cysteine 127. 3 N-linked (GlcNAc...) asparagine glycosylation sites follow: asparagine 140, asparagine 233, and asparagine 390. Residue aspartate 404 participates in substrate binding. N-linked (GlcNAc...) asparagine glycosylation is present at asparagine 470. Aspartate 518 acts as the Nucleophile in catalysis. Glutamate 521 is an active-site residue. The cysteines at positions 533 and 558 are disulfide-linked. Substrate contacts are provided by arginine 600 and aspartate 616. Cysteine 647 and cysteine 658 are joined by a disulfide. An N-linked (GlcNAc...) asparagine glycan is attached at asparagine 652. Residue histidine 674 coordinates substrate. 2 N-linked (GlcNAc...) asparagine glycosylation sites follow: asparagine 882 and asparagine 925.

The protein belongs to the glycosyl hydrolase 31 family.

The protein localises to the lysosome. It is found in the lysosome membrane. The enzyme catalyses Hydrolysis of terminal, non-reducing (1-&gt;4)-linked alpha-D-glucose residues with release of alpha-D-glucose.. Its function is as follows. Essential for the degradation of glycogen in lysosomes. Has highest activity on alpha-1,4-linked glycosidic linkages, but can also hydrolyze alpha-1,6-linked glucans. This is Lysosomal alpha-glucosidase (GAA) from Pongo abelii (Sumatran orangutan).